The primary structure comprises 954 residues: Translation initiation factor IF-2 (954 aa).

The span at 56–75 (KAAAPAAPKAPAPAAESRPA) shows a compositional bias: low complexity. Positions 56 to 355 (KAAAPAAPKA…GVSVPRGDGN (300 aa)) are disordered. Pro residues predominate over residues 76–87 (APAPGPAAPKAP). 2 stretches are compositionally biased toward low complexity: residues 88-125 (APKV…KPGA) and 138-151 (PRQG…SAPR). Over residues 241 to 254 (PGAPRPGGPRPTPG) the composition is skewed to pro residues. The span at 269-322 (GRPGGGGRGPGRPGAPGTGGPGGGGGAPAGGGFGKGGRGRGGTQGAFGKGGAGR) shows a compositional bias: gly residues. Positions 323–332 (GKQRKSKRAK) are enriched in basic residues. Residues 447-618 (PRAPVVTVMG…AVLLTADAAL (172 aa)) enclose the tr-type G domain. Residues 456-463 (GHVDHGKT) form a G1 region. 456–463 (GHVDHGKT) is a binding site for GTP. The segment at 481–485 (GITQH) is G2. The tract at residues 506–509 (DTPG) is G3. GTP contacts are provided by residues 506-510 (DTPGH) and 560-563 (NKID). The G4 stretch occupies residues 560–563 (NKID). Positions 596-598 (SAR) are G5.

It belongs to the TRAFAC class translation factor GTPase superfamily. Classic translation factor GTPase family. IF-2 subfamily.

The protein localises to the cytoplasm. One of the essential components for the initiation of protein synthesis. Protects formylmethionyl-tRNA from spontaneous hydrolysis and promotes its binding to the 30S ribosomal subunits. Also involved in the hydrolysis of GTP during the formation of the 70S ribosomal complex. The polypeptide is Translation initiation factor IF-2 (Pseudarthrobacter chlorophenolicus (strain ATCC 700700 / DSM 12829 / CIP 107037 / JCM 12360 / KCTC 9906 / NCIMB 13794 / A6) (Arthrobacter chlorophenolicus)).